Consider the following 519-residue polypeptide: Chaperone SurA (519 aa).

Positions 1 to 31 (MMRSLHSLRRMSGTVLALMLAAGLPLSAAQA) are cleaved as a signal peptide. Composition is skewed to low complexity over residues 31-45 (AQPA…QKPA) and 197-207 (PAAAQATRAPA). Disordered stretches follow at residues 31 to 50 (AQPA…PAPS) and 196 to 221 (NPAA…PAQS). In terms of domain architecture, PpiC 1 spans 223–324 (PAMLVLAQIL…NGFHILKVVD (102 aa)). The interval 328-361 (GGQPAQAARPAPAPAPQQPSSFQEGPSVAAPQGP) is disordered. The region spanning 364–463 (VTQTHARHIL…FGWHLIQVLE (100 aa)) is the PpiC 2 domain.

The protein localises to the periplasm. It catalyses the reaction [protein]-peptidylproline (omega=180) = [protein]-peptidylproline (omega=0). Chaperone involved in the correct folding and assembly of outer membrane proteins. Recognizes specific patterns of aromatic residues and the orientation of their side chains, which are found more frequently in integral outer membrane proteins. May act in both early periplasmic and late outer membrane-associated steps of protein maturation. This is Chaperone SurA from Bordetella bronchiseptica (strain ATCC BAA-588 / NCTC 13252 / RB50) (Alcaligenes bronchisepticus).